We begin with the raw amino-acid sequence, 164 residues long: D-aminoacyl-tRNA deacylase (164 aa).

2 residues coordinate tRNA: tryptophan 72 and phenylalanine 89. Threonine 90 acts as the Nucleophile in catalysis. The short motif at 104-107 is the C-terminal adenosine nucleotide of tRNA element; sequence HLAK. A Gly-cisPro motif, allows the protein to recognize chirality of D-amino acids motif is present at residues 149 to 150; sequence GP.

It belongs to the DTD family. As to quaternary structure, homodimer.

The protein localises to the cytoplasm. It carries out the reaction glycyl-tRNA(Ala) + H2O = tRNA(Ala) + glycine + H(+). The enzyme catalyses a D-aminoacyl-tRNA + H2O = a tRNA + a D-alpha-amino acid + H(+). It catalyses the reaction D-tyrosyl-tRNA(Tyr) + H2O = D-tyrosine + tRNA(Tyr). In terms of biological role, D-aminoacyl-tRNA deacylase, with no observable activity on tRNAs charged with their cognate L-amino acid. Probably acts by rejecting L-amino acids from its binding site rather than specific recognition of D-amino acids. Catalyzes the hydrolysis of D-tyrosyl-tRNA(Tyr), has no activity on correctly charged L-tyrosyl-tRNA(Tyr). Hydrolyzes correctly charged, achiral, glycyl-tRNA(Gly). Deacylates mischarged D.melanogaster and E.coli glycyl-tRNA(Ala). Probably acts via tRNA-based rather than protein-based catalysis. Acts on tRNAs only when the D-amino acid is either attached to the ribose 3'-OH or transferred to the 3'-OH from the 2'-OH through rapid transesterification. Binds a number of other D-amino acids (D-Arg, D-Glu, D-His, D-Lys, D-Ser), suggesting it may also deacylate other mischarged tRNAs. This is D-aminoacyl-tRNA deacylase from Plasmodium falciparum (isolate 3D7).